The primary structure comprises 137 residues: MEQTFFIIKPDGVKRGLVGEVLKRIEQRGFTIEKLEFRSQVSEELIDQHYQDLVGQSFYPPIREFMTSGPVLVGVISGPKVIETWRTMMGATRPEEALPGTIRGDFAKAAGENEIIQNVVHGSDSEESAKREIALWF.

ATP is bound by residues lysine 9, phenylalanine 58, arginine 86, threonine 92, arginine 103, and asparagine 113. The Pros-phosphohistidine intermediate role is filled by histidine 121.

This sequence belongs to the NDK family. As to quaternary structure, homotetramer. Requires Mg(2+) as cofactor.

It is found in the cytoplasm. It catalyses the reaction a 2'-deoxyribonucleoside 5'-diphosphate + ATP = a 2'-deoxyribonucleoside 5'-triphosphate + ADP. The catalysed reaction is a ribonucleoside 5'-diphosphate + ATP = a ribonucleoside 5'-triphosphate + ADP. Functionally, major role in the synthesis of nucleoside triphosphates other than ATP. The ATP gamma phosphate is transferred to the NDP beta phosphate via a ping-pong mechanism, using a phosphorylated active-site intermediate. The protein is Nucleoside diphosphate kinase of Streptococcus pneumoniae (strain Hungary19A-6).